The primary structure comprises 228 residues: D-lyxose/D-mannose isomerase (228 aa).

Mn(2+)-binding residues include His103, His105, Glu110, and His171.

It belongs to the D-lyxose ketol-isomerase family. Homodimer. Requires Mn(2+) as cofactor.

It carries out the reaction D-lyxose = D-xylulose. The catalysed reaction is D-mannose = D-fructose. In terms of biological role, sugar isomerase that catalyzes the reversible isomerization of D-lyxose to D-xylulose, and D-mannose to D-fructose. Shows optimum activity using D-lyxose as substrate, but can also effectively catalyze the isomerization between D-fructose and D-mannose. Shows lower activity with L-gulose, D-talose and L-ribose. The protein is D-lyxose/D-mannose isomerase of Serratia proteamaculans.